Reading from the N-terminus, the 121-residue chain is Small ribosomal subunit protein uS13 (121 aa).

The interval 95–121 (GLPVRGQKTKTNARTRKGKRKTVGAKS) is disordered.

This sequence belongs to the universal ribosomal protein uS13 family. Part of the 30S ribosomal subunit. Forms a loose heterodimer with protein S19. Forms two bridges to the 50S subunit in the 70S ribosome.

Its function is as follows. Located at the top of the head of the 30S subunit, it contacts several helices of the 16S rRNA. In the 70S ribosome it contacts the 23S rRNA (bridge B1a) and protein L5 of the 50S subunit (bridge B1b), connecting the 2 subunits; these bridges are implicated in subunit movement. Contacts the tRNAs in the A and P-sites. In Campylobacter jejuni subsp. jejuni serotype O:6 (strain 81116 / NCTC 11828), this protein is Small ribosomal subunit protein uS13.